The chain runs to 536 residues: MSDYENDDECWSALESFRVKLISVIDPSRITPYLRQCKVLNPDDEEQVLSDPNLVIRKRKVGVLLDILQRTGHKGYVAFLESLELYYPQLYRKVTGKEPARVFSMIIDASGESGLTQLLMTEVMKLQKKVQDLTALLSSKDDFIKELRVKDSLLRKHQERVQRLKEECELSSAELKRCKDENYDLAMRLAHLSEEKGAALMRNRDLQLEVDQLRHSLMKAEDDCKVERKHTLKLRHAMEQRPSQELLWDLQQERDLLQARVQELEVSVQEGKLHRNSPYIQVLEEDWRQALQEHQEQASTIFSLRKDLRQAEALRTRCMEEKEMFELQCLALRKDAKMYKDRIEAILQQMEEVSIERDQAMTSREELHAQCAQSFQDKDKLRKQVRELDEKADELQLQLFQTESRLLAAEGRLKQQQLDMLILSSDLEDSSPRNSQELSLPQDLEEDAQLSDKGVLADRESPEQPFVVLNKKHLSQTHDTVPSSSEPPEKERRRLKESFENYRRKRALRKMQNSWRQGEGDHGNTTGSDNTDTEGS.

A Phosphoserine modification is found at serine 2. Zn(2+) contacts are provided by aspartate 3, cysteine 10, and histidine 73. One can recognise a CARD domain in the interval 6–98 (NDDECWSALE…QLYRKVTGKE (93 aa)). The linker stretch occupies residues 99-116 (PARVFSMIIDASGESGLT). Coiled-coil stretches lie at residues 117-277 (QLLM…HRNS) and 303-420 (SLRK…QLDM). A Glycyl lysine isopeptide (Lys-Gly) (interchain with G-Cter in ubiquitin) cross-link involves residue lysine 125. Threonine 231 carries the post-translational modification Phosphothreonine. Serine 277 bears the Phosphoserine mark. Phosphoserine is present on residues serine 424, serine 425, serine 431, serine 451, serine 461, serine 483, and serine 498. The tract at residues 425–451 (SDLEDSSPRNSQELSLPQDLEEDAQLS) is disordered. The disordered stretch occupies residues 472 to 536 (KHLSQTHDTV…GSDNTDTEGS (65 aa)). Over residues 487–502 (PPEKERRRLKESFENY) the composition is skewed to basic and acidic residues. Phosphothreonine; by CK2 is present on residues threonine 531 and threonine 533.

Monomer. Homodimer; homodimerization is mediated by the CARD domain which forms an extensive interaction with the adjacent linker and coiled-coil regions; leads to an autoinhibited state. Homomultimer; polymerizes following activation, forming a nucleating helical template that seeds BCL10-filament formation via a CARD-CARD interaction. Interacts (via CARD domain) with BCL10 (via CARD domain); interaction takes place following CARD9 activation and polymerization, leading to the formation of a filamentous CBM complex assembly. Component of a CBM complex (CARD9-BCL10, MALT1), composed of CARD9, BCL10 and MALT1. Interacts with RASGRF1. Interacts with NOD2 (via NACHT domain); interaction is direct. Interacts with RIPK2. Interacts with VHL; without leading to protein degradation. Phosphorylated at Thr-231 by PRKCD downstream of C-type lectin receptors activation: phosphorylation promotes interaction with BCL10, followed by activation of NF-kappa-B and MAP kinase p38 pathways. Phosphorylated at Thr-531 and Thr-533 by CK2 following interaction with VHL, leading to inhibit the ability to activate NF-kappa-B. In terms of processing, ubiquitinated at Lys-125 via 'Lys-27'-linked ubiquitin by TRIM62 downstream of C-type lectin receptors activation; leading to CARD9 activation, followed by activation of NF-kappa-B and MAP kinase p38 pathways. Deubiquitinated at Lys-125 by USP15, inhibiting CARD9.

It is found in the cytoplasm. With respect to regulation, maintained in an autoinhibited state via homodimerization in which the CARD domain forms an extensive interaction with the adjacent linker and coiled-coil regions. Activation downstream of C-type lectin receptors, by phosphorylation by PRKCD and/or ubiquitination by TRIM62, triggers disruption of the CARD domain-coiled coil interface, CARD9 homooligomerization and BCL10 recruitment, followed by activation of NF-kappa-B and MAP kinase p38 pathways. Zinc-binding inhibits activation by stabilizing the CARD ground-state conformation and restricting its capacity to form BCL10-nucleating filaments. Adapter protein that plays a key role in innate immune response against fungi by forming signaling complexes downstream of C-type lectin receptors. CARD9-mediated signals are essential for antifungal immunity against a subset of fungi from the phylum Ascomycota. Transduces signals in myeloid cells downstream of C-type lectin receptors CLEC7A (dectin-1), CLEC6A (dectin-2) and CLEC4E (Mincle), which detect pathogen-associated molecular pattern metabolites (PAMPs), such as fungal carbohydrates, and trigger CARD9 activation. Upon activation, CARD9 homooligomerizes to form a nucleating helical template that recruits BCL10 via CARD-CARD interaction, thereby promoting polymerization of BCL10 and subsequent recruitment of MALT1: this leads to activation of NF-kappa-B and MAP kinase p38 (MAPK11, MAPK12, MAPK13 and/or MAPK14) pathways which stimulate expression of genes encoding pro-inflammatory cytokines and chemokines. CARD9 signaling in antigen-presenting cells links innate sensing of fungi to the activation of adaptive immunity and provides a cytokine milieu that induces the development and subsequent of interleukin 17-producing T helper (Th17) cells. Also involved in activation of myeloid cells via classical ITAM-associated receptors and TLR: required for TLR-mediated activation of MAPK, while it is not required for TLR-induced activation of NF-kappa-B. CARD9 can also be engaged independently of BCL10: forms a complex with RASGRF1 downstream of C-type lectin receptors, which recruits and activates HRAS, leading to ERK activation and the production of cytokines. Acts as an important regulator of the intestinal commensal fungi (mycobiota) component of the gut microbiota. Plays an essential role in antifungal immunity against dissemination of gut fungi: acts by promoting induction of antifungal IgG antibodies response in CX3CR1(+) macrophages to confer protection against disseminated C.albicans or C.auris infection. Also mediates immunity against other pathogens, such as certain bacteria, viruses and parasites; CARD9 signaling is however redundant with other innate immune responses. In response to L.monocytogenes infection, required for the production of inflammatory cytokines activated by intracellular peptidoglycan: acts by connecting NOD2 recognition of peptidoglycan to downstream activation of MAP kinases (MAPK) without activating NF-kappa-B. This Rattus norvegicus (Rat) protein is Caspase recruitment domain-containing protein 9.